A 1153-amino-acid polypeptide reads, in one-letter code: Reverse gyrase 2 (1153 aa).

The segment at 1-41 adopts an RG N-terminal-type zinc-finger fold; that stretch reads MLKVNYLFGCPNCNGSISVDRLHAGIPCETCLPGAVEKLDI. Residues C10, C13, C28, and C31 each coordinate Zn(2+). Residues Q86 and 103 to 110 contribute to the ATP site; that span reads APTGVGKT. The region spanning 90 to 276 is the Helicase ATP-binding domain; the sequence is LNKLVRGESF…ALRFLVGFEP (187 aa). A DEAD box motif is present at residues 184 to 187; it reads DDAD. A topoisomerase I region spans residues 567-1153; it reads MNFKTALLVV…VNPLQSEQYV (587 aa). Positions 571-735 constitute a Toprim domain; the sequence is TALLVVESPT…NIFRISYNEI (165 aa). Mg(2+) is bound at residue E577. Residues 654–681 form an RG C-terminal-type zinc finger; the sequence is LYRCMSCGKTITKKVSTCPYCGSSMINS. Residues C657, C660, C671, and C674 each contribute to the Zn(2+) site. D704 is a Mg(2+) binding site. In terms of domain architecture, Topo IA-type catalytic spans 751 to 1142; that stretch reads NESLVKAQIA…DLLNEIKNIK (392 aa). The O-(5'-phospho-DNA)-tyrosine intermediate role is filled by Y894.

This sequence in the N-terminal section; belongs to the DEAD box helicase family. DDVD subfamily. In the C-terminal section; belongs to the type IA topoisomerase family. As to quaternary structure, monomer. Zn(2+) serves as cofactor. The cofactor is Mg(2+).

It localises to the cytoplasm. The catalysed reaction is ATP + H2O = ADP + phosphate + H(+). In terms of biological role, modifies the topological state of DNA by introducing positive supercoils in an ATP-dependent process, increasing the linking number in steps of +1. Binds to single-stranded DNA, transiently cleaves and then rejoins the ends, introducing a positive supercoil in the process. The scissile phosphodiester is attacked by the catalytic tyrosine of the enzyme, resulting in the formation of a DNA-(5'-phosphotyrosyl)-enzyme intermediate. Probably involved in rewinding DNA strands in regions of the chromosome that have opened up to allow replication, transcription, DNA repair and/or for DNA protection. Might be a cell cycle protein. In Sulfolobus acidocaldarius (strain ATCC 33909 / DSM 639 / JCM 8929 / NBRC 15157 / NCIMB 11770), this protein is Reverse gyrase 2.